The chain runs to 287 residues: Leucine-rich repeat-containing protein 72 (287 aa).

LRR repeat units lie at residues 46-67 (DVFE…SRFK), 68-89 (KLKY…TRNY), 90-111 (CLTE…HYLP), and 112-133 (SLHI…VKEL). An LRRCT domain is found at 147-185 (NPLCQYNLYRLYIIYHLPGVELLDRNQVTEKERRSMITI).

This is Leucine-rich repeat-containing protein 72 (LRRC72) from Homo sapiens (Human).